Reading from the N-terminus, the 395-residue chain is ETS-related transcription factor Elf-3 (395 aa).

The region spanning Glu69–Ser155 is the PNT domain. The span at Ala200–Asp240 shows a compositional bias: low complexity. Residues Ala200–Arg275 form a disordered region. Basic and acidic residues predominate over residues Thr246 to Lys265. The span at His266–Arg275 shows a compositional bias: basic residues. A DNA-binding region (ETS) is located at residues Thr297–Gly379.

The protein belongs to the ETS family. Interacts with TBP. Interacts with CREBBP and EP300; these act as transcriptional coactivators of ELF3 and positively modulate its function. Interacts with XRCC5/KU86 and XRCC6/KU70; these inhibit the ability of ELF3 to bind DNA and negatively modulate its transcriptional activity. Associated with CLND7 and POU2F3. Interacts with ZNF768.

It localises to the cytoplasm. The protein resides in the nucleus. Functionally, transcriptional activator that binds and transactivates ETS sequences containing the consensus nucleotide core sequence GGA[AT]. Acts synergistically with POU2F3 to transactivate the SPRR2A promoter and with RUNX1 to transactivate the ANGPT1 promoter. Also transactivates collagenase, CCL20, CLND7, FLG, KRT8, NOS2, PTGS2, SPRR2B, TGFBR2 and TGM3 promoters. Represses KRT4 promoter activity. Involved in mediating vascular inflammation. May play an important role in epithelial cell differentiation and tumorigenesis. May be a critical downstream effector of the ERBB2 signaling pathway. May be associated with mammary gland development and involution. Plays an important role in the regulation of transcription with TATA-less promoters in preimplantation embryos, which is essential in preimplantation development. The chain is ETS-related transcription factor Elf-3 from Rattus norvegicus (Rat).